A 330-amino-acid chain; its full sequence is Catharanthine synthase (330 aa).

Residues 81 to 83 carry the Involved in the stabilization of the negatively charged intermediate by the formation of the oxyanion hole motif; sequence HGA. Gly-84 is a catharanthine binding site. The active-site Proton acceptor is Ser-173. Asp-274 is a catalytic residue. Residue Tyr-305 coordinates catharanthine. Tyr-305 (proton donor/acceptor) is an active-site residue.

It belongs to the 'GDXG' lipolytic enzyme family. Interacts with dehydroprecondylocarpine acetate synthase (DPAS). As to expression, expressed in leaf epidermis.

The protein resides in the cytoplasm. It is found in the cytosol. The protein localises to the nucleus. It catalyses the reaction dehydrosecodine = catharanthine. The protein operates within alkaloid biosynthesis. Component of iboga and aspidosperma monoterpenoid indole alkaloids (MIAs, e.g. tabersonine and catharanthine) biosynthesis pathway from 19E-geissoschizine, psychoactive compounds likely to be used in the treatment of opioid dependence. Catalyzes the conversion of dehydrosecodine to catharanthine. This Catharanthus roseus (Madagascar periwinkle) protein is Catharanthine synthase.